We begin with the raw amino-acid sequence, 794 residues long: Ribonucleoside-diphosphate reductase large subunit (794 aa).

An ATP-cone domain is found at 1–92 (MHVIKRDGGQ…VSNLHKETKK (92 aa)). ATP is bound by residues 5-6 (KR), 11-17 (EGVMFDK), T53, and D57. GDP is bound by residues S202 and S217. Residues C218 and C444 are joined by a disulfide bond. DTTP contacts are provided by residues 226–228 (DSI), K243, R256, and 263–264 (AG). Residue N427 participates in GDP binding. Catalysis depends on N427, which acts as the Proton acceptor. C429 (cysteine radical intermediate) is an active-site residue. GDP contacts are provided by residues E431 and 604–607 (TAST). The active-site Proton acceptor is E431.

The protein belongs to the ribonucleoside diphosphate reductase large chain family. As to quaternary structure, heterodimer of a large and a small subunit.

The protein resides in the cytoplasm. It catalyses the reaction a 2'-deoxyribonucleoside 5'-diphosphate + [thioredoxin]-disulfide + H2O = a ribonucleoside 5'-diphosphate + [thioredoxin]-dithiol. Under complex allosteric control mediated by deoxynucleoside triphosphates and ATP binding to separate specificity and activation sites on the M1 subunit. The type of nucleotide bound at the specificity site determines substrate preference. It seems probable that ATP makes the enzyme reduce CDP and UDP, dGTP favors ADP reduction and dTTP favors GDP reduction. Stimulated by ATP and inhibited by dATP binding to the activity site. In terms of biological role, provides the precursors necessary for DNA synthesis. Catalyzes the biosynthesis of deoxyribonucleotides from the corresponding ribonucleotides. This is Ribonucleoside-diphosphate reductase large subunit (rrm1) from Danio rerio (Zebrafish).